The following is a 250-amino-acid chain: UPF0259 membrane protein Spro_2675 (250 aa).

Transmembrane regions (helical) follow at residues Ile23–Pro43, Ala87–Ile107, Leu132–Val152, Ile156–Phe176, Val192–Ser212, and Ala222–Phe242.

Belongs to the UPF0259 family.

Its subcellular location is the cell inner membrane. In Serratia proteamaculans (strain 568), this protein is UPF0259 membrane protein Spro_2675.